Consider the following 237-residue polypeptide: Sugar fermentation stimulation protein homolog (237 aa).

Belongs to the SfsA family.

In Pseudomonas savastanoi pv. phaseolicola (strain 1448A / Race 6) (Pseudomonas syringae pv. phaseolicola (strain 1448A / Race 6)), this protein is Sugar fermentation stimulation protein homolog.